We begin with the raw amino-acid sequence, 203 residues long: MSLYYTLVFAILVVEIFMFSILALPIPSRYRRPLTLLLLKPFKSSTVQVAIKCVLGFILLLFIDCINRVYSIDKELQLSSASQNNGAIIAQDRIEVLSRKFFAQRNMYLTGITLFLTFVVVRTFGLVIELLTMKDIYRASPPVASSDVKKNDSVTAEAAAQSGASKDDHGDEKNFELLKKIQDIDDEIARLKEKSESLQEEIN.

Topologically, residues 1 to 6 (MSLYYT) are lumenal. Residues 7–27 (LVFAILVVEIFMFSILALPIP) form a helical membrane-spanning segment. The Cytoplasmic portion of the chain corresponds to 28 to 45 (SRYRRPLTLLLLKPFKSS). Residues 46-66 (TVQVAIKCVLGFILLLFIDCI) traverse the membrane as a helical segment. The Lumenal portion of the chain corresponds to 67 to 110 (NRVYSIDKELQLSSASQNNGAIIAQDRIEVLSRKFFAQRNMYLT). The helical transmembrane segment at 111–131 (GITLFLTFVVVRTFGLVIELL) threads the bilayer. The Cytoplasmic portion of the chain corresponds to 132-203 (TMKDIYRASP…KSESLQEEIN (72 aa)). The tract at residues 142 to 171 (PVASSDVKKNDSVTAEAAAQSGASKDDHGD) is disordered.

This sequence belongs to the BCAP29/BCAP31 family.

It localises to the endoplasmic reticulum membrane. Its function is as follows. May play a role in anterograde transport of membrane proteins from the endoplasmic reticulum to the Golgi. May be involved in invertase secretion. This chain is Endoplasmic reticulum transmembrane protein 3 (YET3), found in Saccharomyces cerevisiae (strain ATCC 204508 / S288c) (Baker's yeast).